A 114-amino-acid chain; its full sequence is Peroxisomal biogenesis factor 39 (114 aa).

Disordered stretches follow at residues 1–26 (MSWW…AEPA) and 53–114 (ITAT…PRVS). The residue at position 102 (Ser102) is a Phosphoserine.

The protein localises to the peroxisome. May be a peroxin involved in the PTS2-mediated protein import pathway. This Mus musculus (Mouse) protein is Peroxisomal biogenesis factor 39 (Pex39).